The sequence spans 367 residues: MTNIRKSHPLIKIINNSFIDLPAPSNISSWWNFGSLLGICLALQILTGLFLAMHYTSDTATAFNSVSHMCREVNYGWVLRYMHANGASMFFICLYLHIGRGLYYGSYMFKETWNMGVILLFAVMATAFMGYVLPWGQMSFWGATVITNLLSAIPYIGANLVEWIWGGFSVDKATLTRFFAFHFLLPFIISALVMVHLLFLHETGSNNPTGIPSNMDMIPFHPYYTIKDILGFFMMMLILLCLVLFSPDMLGDPDNYMPANPLNTPPHIKPEWYFLFAYAILRSIPNKLGGVLALVLSILILIIIPFLHTSKQRSMTFRPFSQCLFWLLVADLLTLTWIGGQPVEHPYIIIGQLASILYFMIIIVIMP.

4 consecutive transmembrane segments (helical) span residues 33–53 (FGSL…FLAM), 77–98 (WVLR…YLHI), 113–133 (WNMG…GYVL), and 178–198 (FFAF…VHLL). Residues histidine 83 and histidine 97 each contribute to the heme b site. The heme b site is built by histidine 182 and histidine 196. Histidine 201 contributes to the a ubiquinone binding site. The next 4 helical transmembrane spans lie at 226 to 246 (IKDI…VLFS), 288 to 308 (LGGV…PFLH), 320 to 340 (FSQC…WIGG), and 347 to 367 (YIII…VIMP).

It belongs to the cytochrome b family. In terms of assembly, the cytochrome bc1 complex contains 11 subunits: 3 respiratory subunits (MT-CYB, CYC1 and UQCRFS1), 2 core proteins (UQCRC1 and UQCRC2) and 6 low-molecular weight proteins (UQCRH/QCR6, UQCRB/QCR7, UQCRQ/QCR8, UQCR10/QCR9, UQCR11/QCR10 and a cleavage product of UQCRFS1). This cytochrome bc1 complex then forms a dimer. Heme b serves as cofactor.

The protein localises to the mitochondrion inner membrane. Its function is as follows. Component of the ubiquinol-cytochrome c reductase complex (complex III or cytochrome b-c1 complex) that is part of the mitochondrial respiratory chain. The b-c1 complex mediates electron transfer from ubiquinol to cytochrome c. Contributes to the generation of a proton gradient across the mitochondrial membrane that is then used for ATP synthesis. This is Cytochrome b (MT-CYB) from Hypsugo savii (Savi's pipistrelle).